Here is a 150-residue protein sequence, read N- to C-terminus: Interferon antagonist OPG027 (150 aa).

Belongs to the orthopoxvirus OPG027 family.

Inhibits antiviral activity induced by type I interferons. Does not block signal transduction of IFN, but is important to counteract the host antiviral state induced by a pre-treatment with IFN. In Vaccinia virus (strain Ankara) (VACV), this protein is Interferon antagonist OPG027 (OPG027).